The following is a 264-amino-acid chain: Thymidylate synthase (264 aa).

R21 serves as a coordination point for dUMP. H51 is a binding site for (6R)-5,10-methylene-5,6,7,8-tetrahydrofolate. 126–127 (RR) contributes to the dUMP binding site. Catalysis depends on C146, which acts as the Nucleophile. DUMP-binding positions include 166-169 (RSVD), N177, and 207-209 (HLY). Position 169 (D169) interacts with (6R)-5,10-methylene-5,6,7,8-tetrahydrofolate. Position 263 (S263) interacts with (6R)-5,10-methylene-5,6,7,8-tetrahydrofolate.

Belongs to the thymidylate synthase family. Bacterial-type ThyA subfamily. As to quaternary structure, homodimer.

Its subcellular location is the cytoplasm. The catalysed reaction is dUMP + (6R)-5,10-methylene-5,6,7,8-tetrahydrofolate = 7,8-dihydrofolate + dTMP. Its pathway is pyrimidine metabolism; dTTP biosynthesis. Functionally, catalyzes the reductive methylation of 2'-deoxyuridine-5'-monophosphate (dUMP) to 2'-deoxythymidine-5'-monophosphate (dTMP) while utilizing 5,10-methylenetetrahydrofolate (mTHF) as the methyl donor and reductant in the reaction, yielding dihydrofolate (DHF) as a by-product. This enzymatic reaction provides an intracellular de novo source of dTMP, an essential precursor for DNA biosynthesis. The sequence is that of Thymidylate synthase from Anoxybacillus flavithermus (strain DSM 21510 / WK1).